Here is a 391-residue protein sequence, read N- to C-terminus: Homoserine O-acetyltransferase (391 aa).

Positions 50 to 360 (NAILICHALT…DKGHDAFLLD (311 aa)) constitute an AB hydrolase-1 domain. The Nucleophile role is filled by serine 155. Arginine 225 serves as a coordination point for substrate. Active-site residues include aspartate 321 and histidine 354. Aspartate 355 contacts substrate.

Belongs to the AB hydrolase superfamily. MetX family. In terms of assembly, homodimer.

It is found in the cytoplasm. The enzyme catalyses L-homoserine + acetyl-CoA = O-acetyl-L-homoserine + CoA. Its pathway is amino-acid biosynthesis; L-methionine biosynthesis via de novo pathway; O-acetyl-L-homoserine from L-homoserine: step 1/1. In terms of biological role, transfers an acetyl group from acetyl-CoA to L-homoserine, forming acetyl-L-homoserine. The protein is Homoserine O-acetyltransferase of Rhodospirillum rubrum (strain ATCC 11170 / ATH 1.1.1 / DSM 467 / LMG 4362 / NCIMB 8255 / S1).